A 358-amino-acid polypeptide reads, in one-letter code: Envelope glycoprotein K (358 aa).

An N-terminal signal peptide occupies residues 1-33; sequence MSRVQCLRLAAVIASISHLIFLVWFVCWNSVLE. The Extracellular segment spans residues 34–141; it reads NNEDCVYATR…LEMADCMAYL (108 aa). Residues asparagine 57 and asparagine 80 are each glycosylated (N-linked (GlcNAc...) asparagine; by host). The helical transmembrane segment at 142–162 threads the bilayer; that stretch reads WFFQVRTATAALLMYLAFLCV. Over 163–235 the chain is Cytoplasmic; sequence NRQRRGFGPW…DTLGFYLMHP (73 aa). The helical transmembrane segment at 236–256 threads the bilayer; the sequence is LALLLRAIETILYFASLVASA. The Extracellular portion of the chain corresponds to 257 to 273; sequence TVLRVNFDPCSVVLPNH. The chain crosses the membrane as a helical span at residues 274-294; sequence VKVFAWVFVAALGALEVVSAI. Over 295 to 323 the chain is Cytoplasmic; sequence DHLRRETRSARDAAAVIRPTNIIAACCAN. A helical transmembrane segment spans residues 324 to 344; sequence IISHVLLRMLYGAALVLVVIG. The Extracellular segment spans residues 345 to 358; it reads ALKYEREIQTRLLG.

The protein belongs to the alphaherpesvirinae glycoprotein K family. As to quaternary structure, interacts (via UL20 interaction region) with protein UL20 (via N-terminus); this interaction probably plays a role in the coordinate transport of protein UL20 and gK to the trans-Golgi network (TGN), and is required for the cell surface expression of gK.

It localises to the host cell membrane. The protein resides in the host endosome membrane. It is found in the host Golgi apparatus membrane. Glycoprotein that probably modulates membrane fusion events during secondary envelopment of cytoplasmic capsids that bud into specific trans-Golgi network (TGN)-derived membranes. Also plays a role, together with gB, in virus-induced cell-to-cell fusion (syncytia formation). Seems to block fusion of virions with infected-cell membranes. The chain is Envelope glycoprotein K (gK) from Psittacid herpesvirus 1 (isolate Amazon parrot/-/97-0001/1997) (PsHV-1).